Here is a 736-residue protein sequence, read N- to C-terminus: Capsid protein (736 aa).

The interval E633–G692 is disordered. The segment covering R650–D664 has biased composition (basic and acidic residues).

It belongs to the anelloviridae capsid protein family.

It is found in the virion. Functionally, self assemble to form an icosahedral capsid. The chain is Capsid protein from Torque teno virus (isolate Human/Finland/Hel32/2002) (TTV).